The chain runs to 128 residues: Large ribosomal subunit protein bL12 (128 aa).

Belongs to the bacterial ribosomal protein bL12 family. In terms of assembly, homodimer. Part of the ribosomal stalk of the 50S ribosomal subunit. Forms a multimeric L10(L12)X complex, where L10 forms an elongated spine to which 2 to 4 L12 dimers bind in a sequential fashion. Binds GTP-bound translation factors.

Functionally, forms part of the ribosomal stalk which helps the ribosome interact with GTP-bound translation factors. Is thus essential for accurate translation. This is Large ribosomal subunit protein bL12 from Synechocystis sp. (strain ATCC 27184 / PCC 6803 / Kazusa).